The primary structure comprises 137 residues: Putative nickel-responsive regulator (137 aa).

Ni(2+)-binding residues include His-78, His-89, His-91, and Cys-97.

Belongs to the transcriptional regulatory CopG/NikR family. The cofactor is Ni(2+).

Functionally, transcriptional regulator. In Syntrophus aciditrophicus (strain SB), this protein is Putative nickel-responsive regulator.